The sequence spans 123 residues: U11/U12 small nuclear ribonucleoprotein 25 kDa protein (123 aa).

Residues 32-123 (MTVRVCKMDG…VSFIKKLRQK (92 aa)) form the Ubiquitin-like domain.

As to quaternary structure, component of the U11/U12 snRNPs that are part of the U12-type spliceosome.

The protein resides in the nucleus. In Mus musculus (Mouse), this protein is U11/U12 small nuclear ribonucleoprotein 25 kDa protein (Snrnp25).